The primary structure comprises 315 residues: Olfactory receptor 2T5 (315 aa).

The Extracellular segment spans residues 1-29 (MANITRMANHTGKLDFILMGLFRRSKHPA). Residues Asn3 and Asn9 are each glycosylated (N-linked (GlcNAc...) asparagine). The helical transmembrane segment at 30-53 (LLSVVIFVVFLKALSGNAVLILLI) threads the bilayer. Residues 54–61 (HCDAHLHS) are Cytoplasmic-facing. A helical membrane pass occupies residues 62–83 (PMYFFISQLSLMDMAYISVTVP). The Extracellular portion of the chain corresponds to 84-104 (KMLLDQVMGVNKVSAPECGMQ). A disulfide bridge connects residues Cys101 and Cys193. Residues 105-124 (MFLYLTLAGSEFFLLATMAY) form a helical membrane-spanning segment. The Cytoplasmic segment spans residues 125-143 (DRYVAICHPLRYPVLMNHR). The chain crosses the membrane as a helical span at residues 144–162 (VCLFLASGCWFLGSVDGFM). At 163–199 (LTPITMSFPFCRSWEIHHFFCEVPAVTILSCSDTSLY) the chain is on the extracellular side. The helical transmembrane segment at 200-223 (ETLMYLCCVLMLLIPVTIISSSYL) threads the bilayer. Over 224 to 240 (LILLTVHRMNSAEGRKK) the chain is Cytoplasmic. The helical transmembrane segment at 241 to 263 (AFATCSSHLTVVILFYGAAVYTY) threads the bilayer. Residues 264–276 (MLPSSYHTPEKDM) lie on the Extracellular side of the membrane. The chain crosses the membrane as a helical span at residues 277-296 (MVSVFYTILTPVLNPLIYSL). Residues 297-315 (RNKDVMGALKKMLTVRFVL) lie on the Cytoplasmic side of the membrane.

It belongs to the G-protein coupled receptor 1 family.

It localises to the cell membrane. In terms of biological role, odorant receptor. The polypeptide is Olfactory receptor 2T5 (OR2T5) (Homo sapiens (Human)).